The chain runs to 479 residues: Glutamate--tRNA ligase (479 aa).

A 'HIGH' region motif is present at residues 9-19; sequence PSPTGNLHIGT. A 'KMSKS' region motif is present at residues 243-247; the sequence is KLSKR. Residue lysine 246 coordinates ATP.

The protein belongs to the class-I aminoacyl-tRNA synthetase family. Glutamate--tRNA ligase type 1 subfamily. As to quaternary structure, monomer.

Its subcellular location is the cytoplasm. It catalyses the reaction tRNA(Glu) + L-glutamate + ATP = L-glutamyl-tRNA(Glu) + AMP + diphosphate. In terms of biological role, catalyzes the attachment of glutamate to tRNA(Glu) in a two-step reaction: glutamate is first activated by ATP to form Glu-AMP and then transferred to the acceptor end of tRNA(Glu). The sequence is that of Glutamate--tRNA ligase from Synechococcus sp. (strain JA-3-3Ab) (Cyanobacteria bacterium Yellowstone A-Prime).